The sequence spans 246 residues: Proteasome subunit alpha type-6 (246 aa).

This sequence belongs to the peptidase T1A family. In terms of assembly, the 26S proteasome consists of a 20S proteasome core and two 19S regulatory subunits. The 20S proteasome core is composed of 28 subunits that are arranged in four stacked rings, resulting in a barrel-shaped structure. The two end rings are each formed by seven alpha subunits, and the two central rings are each formed by seven beta subunits. The catalytic chamber with the active sites is on the inside of the barrel.

Its subcellular location is the cytoplasm. It is found in the nucleus. In terms of biological role, the proteasome is a multicatalytic proteinase complex which is characterized by its ability to cleave peptides with Arg, Phe, Tyr, Leu, and Glu adjacent to the leaving group at neutral or slightly basic pH. The proteasome has an ATP-dependent proteolytic activity. This chain is Proteasome subunit alpha type-6 (PAA1), found in Oryza sativa subsp. japonica (Rice).